A 251-amino-acid chain; its full sequence is Octanoyltransferase (251 aa).

Residues 56-241 form the BPL/LPL catalytic domain; the sequence is ADTGDEIWVV…NLDGASAAAD (186 aa). Residues 96–103, 168–170, and 181–183 contribute to the substrate site; these read RGGQITYH, ALG, and GLS. Residue Cys-199 is the Acyl-thioester intermediate of the active site.

It belongs to the LipB family.

The protein resides in the cytoplasm. It carries out the reaction octanoyl-[ACP] + L-lysyl-[protein] = N(6)-octanoyl-L-lysyl-[protein] + holo-[ACP] + H(+). It functions in the pathway protein modification; protein lipoylation via endogenous pathway; protein N(6)-(lipoyl)lysine from octanoyl-[acyl-carrier-protein]: step 1/2. Catalyzes the transfer of endogenously produced octanoic acid from octanoyl-acyl-carrier-protein onto the lipoyl domains of lipoate-dependent enzymes. Lipoyl-ACP can also act as a substrate although octanoyl-ACP is likely to be the physiological substrate. The chain is Octanoyltransferase from Burkholderia orbicola (strain AU 1054).